The chain runs to 485 residues: Aspartyl/glutamyl-tRNA(Asn/Gln) amidotransferase subunit B (485 aa).

This sequence belongs to the GatB/GatE family. GatB subfamily. In terms of assembly, heterotrimer of A, B and C subunits.

It catalyses the reaction L-glutamyl-tRNA(Gln) + L-glutamine + ATP + H2O = L-glutaminyl-tRNA(Gln) + L-glutamate + ADP + phosphate + H(+). The catalysed reaction is L-aspartyl-tRNA(Asn) + L-glutamine + ATP + H2O = L-asparaginyl-tRNA(Asn) + L-glutamate + ADP + phosphate + 2 H(+). Allows the formation of correctly charged Asn-tRNA(Asn) or Gln-tRNA(Gln) through the transamidation of misacylated Asp-tRNA(Asn) or Glu-tRNA(Gln) in organisms which lack either or both of asparaginyl-tRNA or glutaminyl-tRNA synthetases. The reaction takes place in the presence of glutamine and ATP through an activated phospho-Asp-tRNA(Asn) or phospho-Glu-tRNA(Gln). This Rhodospirillum rubrum (strain ATCC 11170 / ATH 1.1.1 / DSM 467 / LMG 4362 / NCIMB 8255 / S1) protein is Aspartyl/glutamyl-tRNA(Asn/Gln) amidotransferase subunit B.